Here is a 376-residue protein sequence, read N- to C-terminus: MSRLQFQLQTRDGRARRGRLTFPRGTVETPAFMPVGTYGSVKGILPDDVRALGAEIILGNTFHLYLRPGLDIIADHGGLHGFCRWDGPILTDSGGFQVFSLAHRRKITEQGVTFASPTDGARVFLGPEESMKIQKVLDSDVVMIFDECTPYPATEDVARRSMELSLRWAQRSRNAHDELGNDAALFGIVQGGVHTDLRSRSAEALQAIGFDGYAVGGLAVGEPEHERNAMLDHLDPELPSDRPRYLMGVGRPEDLVEGVARGVDMFDCVMPTRNARNGHYFTSFGTVRIRNSQYARDMDPIEPGCGCVACTGGYTRSYLRHLDRCNEMLAPMLGTLHNLFYYEKLMADIRAAIEAGTFLAFRESFYAARGAVAPPL.

Catalysis depends on Asp-92, which acts as the Proton acceptor. Substrate contacts are provided by residues 92 to 96, Asp-146, Gln-190, and Gly-217; that span reads DSGGF. Residues 248–254 form an RNA binding region; it reads GVGRPED. Catalysis depends on Asp-267, which acts as the Nucleophile. The tract at residues 272–276 is RNA binding; important for wobble base 34 recognition; sequence TRNAR. Cys-305, Cys-307, Cys-310, and His-337 together coordinate Zn(2+).

It belongs to the queuine tRNA-ribosyltransferase family. In terms of assembly, homodimer. Within each dimer, one monomer is responsible for RNA recognition and catalysis, while the other monomer binds to the replacement base PreQ1. The cofactor is Zn(2+).

It catalyses the reaction 7-aminomethyl-7-carbaguanine + guanosine(34) in tRNA = 7-aminomethyl-7-carbaguanosine(34) in tRNA + guanine. It functions in the pathway tRNA modification; tRNA-queuosine biosynthesis. In terms of biological role, catalyzes the base-exchange of a guanine (G) residue with the queuine precursor 7-aminomethyl-7-deazaguanine (PreQ1) at position 34 (anticodon wobble position) in tRNAs with GU(N) anticodons (tRNA-Asp, -Asn, -His and -Tyr). Catalysis occurs through a double-displacement mechanism. The nucleophile active site attacks the C1' of nucleotide 34 to detach the guanine base from the RNA, forming a covalent enzyme-RNA intermediate. The proton acceptor active site deprotonates the incoming PreQ1, allowing a nucleophilic attack on the C1' of the ribose to form the product. After dissociation, two additional enzymatic reactions on the tRNA convert PreQ1 to queuine (Q), resulting in the hypermodified nucleoside queuosine (7-(((4,5-cis-dihydroxy-2-cyclopenten-1-yl)amino)methyl)-7-deazaguanosine). The protein is Queuine tRNA-ribosyltransferase of Stenotrophomonas maltophilia (strain K279a).